The following is a 504-amino-acid chain: Maturase K (504 aa).

It belongs to the intron maturase 2 family. MatK subfamily.

It localises to the plastid. It is found in the chloroplast. Usually encoded in the trnK tRNA gene intron. Probably assists in splicing its own and other chloroplast group II introns. This is Maturase K from Berzelia lanuginosa (Buttonbush).